Here is a 210-residue protein sequence, read N- to C-terminus: NAD(P)H-quinone oxidoreductase subunit I (210 aa).

4Fe-4S ferredoxin-type domains are found at residues Gly-54–Val-83 and Tyr-94–Asp-123. 8 residues coordinate [4Fe-4S] cluster: Cys-63, Cys-66, Cys-69, Cys-73, Cys-103, Cys-106, Cys-109, and Cys-113.

The protein belongs to the complex I 23 kDa subunit family. NDH-1 is composed of at least 11 different subunits. The cofactor is [4Fe-4S] cluster.

The protein localises to the cellular thylakoid membrane. It catalyses the reaction a plastoquinone + NADH + (n+1) H(+)(in) = a plastoquinol + NAD(+) + n H(+)(out). The catalysed reaction is a plastoquinone + NADPH + (n+1) H(+)(in) = a plastoquinol + NADP(+) + n H(+)(out). In terms of biological role, NDH-1 shuttles electrons from an unknown electron donor, via FMN and iron-sulfur (Fe-S) centers, to quinones in the respiratory and/or the photosynthetic chain. The immediate electron acceptor for the enzyme in this species is believed to be plastoquinone. Couples the redox reaction to proton translocation, and thus conserves the redox energy in a proton gradient. This Synechococcus sp. (strain JA-3-3Ab) (Cyanobacteria bacterium Yellowstone A-Prime) protein is NAD(P)H-quinone oxidoreductase subunit I.